The chain runs to 704 residues: Elongation factor G (704 aa).

The tr-type G domain occupies 8-291 (DKVRNIGIMA…AVVEYLASPV (284 aa)). GTP is bound by residues 17 to 24 (AHIDAGKT), 90 to 94 (DTPGH), and 144 to 147 (NKMD).

This sequence belongs to the TRAFAC class translation factor GTPase superfamily. Classic translation factor GTPase family. EF-G/EF-2 subfamily.

The protein resides in the cytoplasm. In terms of biological role, catalyzes the GTP-dependent ribosomal translocation step during translation elongation. During this step, the ribosome changes from the pre-translocational (PRE) to the post-translocational (POST) state as the newly formed A-site-bound peptidyl-tRNA and P-site-bound deacylated tRNA move to the P and E sites, respectively. Catalyzes the coordinated movement of the two tRNA molecules, the mRNA and conformational changes in the ribosome. The chain is Elongation factor G from Pelodictyon phaeoclathratiforme (strain DSM 5477 / BU-1).